A 301-amino-acid polypeptide reads, in one-letter code: Probable alpha-L-glutamate ligase 1 (301 aa).

Positions 104-287 (LQLLSRKGIG…VTEPIVEYIE (184 aa)) constitute an ATP-grasp domain. ATP contacts are provided by residues K141, 178–179 (EY), D187, and 211–213 (RSN). 3 residues coordinate Mg(2+): D248, E260, and N262. The Mn(2+) site is built by D248, E260, and N262.

The protein belongs to the RimK family. Requires Mg(2+) as cofactor. Mn(2+) serves as cofactor.

The protein is Probable alpha-L-glutamate ligase 1 of Shewanella sp. (strain W3-18-1).